Here is a 173-residue protein sequence, read N- to C-terminus: Lipoprotein signal peptidase (173 aa).

A run of 3 helical transmembrane segments spans residues tryptophan 12–glutamine 32, tryptophan 67–leucine 87, and alanine 102–isoleucine 122. Catalysis depends on residues aspartate 123 and aspartate 141. Residues phenylalanine 137–phenylalanine 157 traverse the membrane as a helical segment.

The protein belongs to the peptidase A8 family.

It localises to the cell inner membrane. The catalysed reaction is Release of signal peptides from bacterial membrane prolipoproteins. Hydrolyzes -Xaa-Yaa-Zaa-|-(S,diacylglyceryl)Cys-, in which Xaa is hydrophobic (preferably Leu), and Yaa (Ala or Ser) and Zaa (Gly or Ala) have small, neutral side chains.. The protein operates within protein modification; lipoprotein biosynthesis (signal peptide cleavage). Functionally, this protein specifically catalyzes the removal of signal peptides from prolipoproteins. In Psychromonas ingrahamii (strain DSM 17664 / CCUG 51855 / 37), this protein is Lipoprotein signal peptidase.